The primary structure comprises 339 residues: Malate dehydrogenase 3, cytoplasmic (339 aa).

NAD(+)-binding positions include 22 to 23 (NI), Asp49, and Gly96. Arg105 is an oxaloacetate binding site. NAD(+) is bound by residues Gln119 and Asn138. Residues Asn138, Arg169, His194, and Ser249 each contribute to the oxaloacetate site. His194 serves as the catalytic Proton acceptor.

The protein belongs to the LDH/MDH superfamily. MDH type 2 family. In terms of tissue distribution, expressed in rosette leaves at low levels.

Its subcellular location is the cytoplasm. It catalyses the reaction (S)-malate + NAD(+) = oxaloacetate + NADH + H(+). Functionally, catalyzes a reversible NAD-dependent dehydrogenase reaction involved in central metabolism and redox homeostasis between organelle compartments. The chain is Malate dehydrogenase 3, cytoplasmic from Arabidopsis thaliana (Mouse-ear cress).